The sequence spans 1489 residues: Chromatin-remodeling ATPase INO80 (1489 aa).

2 disordered regions span residues 112 to 375 (PSIP…APSY) and 467 to 487 (EEAKKRKLAPPPPPPPQQVRR). 2 stretches are compositionally biased toward polar residues: residues 122-142 (SVVSSDTEQIQDSETTANSKK) and 149-162 (IKTSGKSPTKSPAT). Residues 164–177 (GRRRGAGGNRRVKR) show a composition bias toward basic residues. The segment covering 179–190 (SNLSKTVRSRNA) has biased composition (polar residues). Residues 198–207 (NENIENGGTT) are compositionally biased toward low complexity. A compositionally biased stretch (basic and acidic residues) spans 235–252 (HTEKDASGSAADLDKDIV). The segment covering 268 to 289 (VSSTSLLSRNKSNKPTKSSPLT) has biased composition (polar residues). 2 stretches are compositionally biased toward acidic residues: residues 305-319 (GNEDMDHDSVLDADD) and 327-371 (NPND…DDDF). Positions 518 to 643 (IWKDMARRDS…SHFIGSKIKT (126 aa)) constitute a DBINO domain. The Helicase ATP-binding domain occupies 758–930 (ANLYDQGING…WALLHFIMPS (173 aa)). An ATP-binding site is contributed by 771-778 (DEMGLGKT). Residues 881 to 884 (DEAQ) carry the DEAQ box motif. The 157-residue stretch at 1323-1479 (KLDELLVKLK…KAKENKQKII (157 aa)) folds into the Helicase C-terminal domain.

The protein belongs to the SNF2/RAD54 helicase family. In terms of assembly, component of the INO80 chromatin-remodeling complex.

It localises to the nucleus. The enzyme catalyses ATP + H2O = ADP + phosphate + H(+). In terms of biological role, ATPase component of the INO80 complex which remodels chromatin by shifting nucleosomes and is involved in DNA repair. The protein is Chromatin-remodeling ATPase INO80 (INO80) of Kluyveromyces lactis (strain ATCC 8585 / CBS 2359 / DSM 70799 / NBRC 1267 / NRRL Y-1140 / WM37) (Yeast).